The chain runs to 430 residues: Ribosomal protein uS12 methylthiotransferase RimO (430 aa).

The MTTase N-terminal domain maps to 2 to 119 (ISVYSISLGC…WPEMIGRALG (118 aa)). Cysteine 11, cysteine 46, cysteine 81, cysteine 145, cysteine 149, and cysteine 152 together coordinate [4Fe-4S] cluster. The region spanning 131 to 361 (STGPSYAYLK…MEVQAEISEE (231 aa)) is the Radical SAM core domain. A TRAM domain is found at 364–430 (EGFTGSDEDV…SRTYDLVALS (67 aa)).

Belongs to the methylthiotransferase family. RimO subfamily. [4Fe-4S] cluster is required as a cofactor.

The protein localises to the cytoplasm. The catalysed reaction is L-aspartate(89)-[ribosomal protein uS12]-hydrogen + (sulfur carrier)-SH + AH2 + 2 S-adenosyl-L-methionine = 3-methylsulfanyl-L-aspartate(89)-[ribosomal protein uS12]-hydrogen + (sulfur carrier)-H + 5'-deoxyadenosine + L-methionine + A + S-adenosyl-L-homocysteine + 2 H(+). Functionally, catalyzes the methylthiolation of an aspartic acid residue of ribosomal protein uS12. The protein is Ribosomal protein uS12 methylthiotransferase RimO of Oleidesulfovibrio alaskensis (strain ATCC BAA-1058 / DSM 17464 / G20) (Desulfovibrio alaskensis).